A 304-amino-acid polypeptide reads, in one-letter code: Ribosomal RNA small subunit methyltransferase H (304 aa).

Residues 37–39, D57, F79, D100, and H107 contribute to the S-adenosyl-L-methionine site; that span reads GGH.

This sequence belongs to the methyltransferase superfamily. RsmH family.

It localises to the cytoplasm. The enzyme catalyses cytidine(1402) in 16S rRNA + S-adenosyl-L-methionine = N(4)-methylcytidine(1402) in 16S rRNA + S-adenosyl-L-homocysteine + H(+). Functionally, specifically methylates the N4 position of cytidine in position 1402 (C1402) of 16S rRNA. The protein is Ribosomal RNA small subunit methyltransferase H of Phocaeicola vulgatus (strain ATCC 8482 / DSM 1447 / JCM 5826 / CCUG 4940 / NBRC 14291 / NCTC 11154) (Bacteroides vulgatus).